Reading from the N-terminus, the 249-residue chain is Low affinity immunoglobulin gamma Fc region receptor III-A (249 aa).

The first 16 residues, 1 to 16 (MWQLLPSTALLLVASA), serve as a signal peptide directing secretion. Residues 17-198 (RPQAADLPKA…IQGPPVPSTS (182 aa)) lie on the Extracellular side of the membrane. 2 consecutive Ig-like C2-type domains span residues 24–104 (PKAV…LEVH) and 119–172 (EGEP…YFCR). 2 disulfides stabilise this stretch: Cys-47-Cys-88 and Cys-127-Cys-171. N-linked (GlcNAc...) asparagine glycans are attached at residues Asn-55, Asn-63, Asn-166, and Asn-179. Residues 199–219 (ALLPFWPHIPFAVVMALLFAV) traverse the membrane as a helical segment. At 220 to 249 (DTGLYFAMQRHLHNSKRAWENSKVSWKQDP) the chain is on the cytoplasmic side.

As to quaternary structure, forms a heterooligomeric complex with ITAM-containing signaling subunits FCER1G. Interacts (via transmembrane domain) with signaling subunits; this interaction is a prerequisite for receptor complex expression on the cell surface and intracellular signal transduction. Binds the Fc region of antigen-complexed IgG.

It is found in the cell membrane. In terms of biological role, receptor for the invariable Fc fragment of immunoglobulin gamma (IgG). Optimally activated upon binding of clustered antigen-IgG complexes displayed on cell surfaces, triggers lysis of antibody-coated cells, a process known as antibody-dependent cellular cytotoxicity (ADCC). Does not bind free monomeric IgG, thus avoiding inappropriate effector cell activation in the absence of antigenic trigger. Mediates IgG effector functions on natural killer (NK) cells. Binds antigen-IgG complexes generated upon infection and triggers NK cell-dependent cytokine production and degranulation to limit viral load and propagation. Fc-binding subunit that associates with FCER1G adapter to form functional signaling complexes. Following the engagement of antigen-IgG complexes, triggers phosphorylation of immunoreceptor tyrosine-based activation motif (ITAM)-containing adapter with subsequent activation of phosphatidylinositol 3-kinase signaling and sustained elevation of intracellular calcium that ultimately drive NK cell activation. Mediates enhanced ADCC in response to afucosylated IgGs. This Mustela putorius furo (European domestic ferret) protein is Low affinity immunoglobulin gamma Fc region receptor III-A.